Consider the following 417-residue polypeptide: NADH-quinone oxidoreductase subunit D (417 aa).

The protein belongs to the complex I 49 kDa subunit family. As to quaternary structure, NDH-1 is composed of 14 different subunits. Subunits NuoB, C, D, E, F, and G constitute the peripheral sector of the complex.

Its subcellular location is the cell inner membrane. The enzyme catalyses a quinone + NADH + 5 H(+)(in) = a quinol + NAD(+) + 4 H(+)(out). In terms of biological role, NDH-1 shuttles electrons from NADH, via FMN and iron-sulfur (Fe-S) centers, to quinones in the respiratory chain. The immediate electron acceptor for the enzyme in this species is believed to be ubiquinone. Couples the redox reaction to proton translocation (for every two electrons transferred, four hydrogen ions are translocated across the cytoplasmic membrane), and thus conserves the redox energy in a proton gradient. This chain is NADH-quinone oxidoreductase subunit D, found in Legionella pneumophila subsp. pneumophila (strain Philadelphia 1 / ATCC 33152 / DSM 7513).